Reading from the N-terminus, the 233-residue chain is Orotidine 5'-phosphate decarboxylase (233 aa).

Substrate-binding positions include D11, K33, 60–69 (DLKFHDIPNT), T120, R181, Q190, G210, and R211. The active-site Proton donor is the K62.

The protein belongs to the OMP decarboxylase family. Type 1 subfamily. As to quaternary structure, homodimer.

It carries out the reaction orotidine 5'-phosphate + H(+) = UMP + CO2. Its pathway is pyrimidine metabolism; UMP biosynthesis via de novo pathway; UMP from orotate: step 2/2. Its function is as follows. Catalyzes the decarboxylation of orotidine 5'-monophosphate (OMP) to uridine 5'-monophosphate (UMP). In Vibrio campbellii (strain ATCC BAA-1116), this protein is Orotidine 5'-phosphate decarboxylase.